The chain runs to 93 residues: Protein YzgL (93 aa).

The chain is Protein YzgL (yzgL) from Escherichia coli (strain K12).